The following is a 44-amino-acid chain: VVGGDECNINEHRFLVALYANSSLLCGGTLINQEWVLIAAHCDR.

The region spanning 1–44 (VVGGDECNINEHRFLVALYANSSLLCGGTLINQEWVLIAAHCDR) is the Peptidase S1 domain. A disulfide bond links cysteine 26 and cysteine 42. Residue histidine 41 is the Charge relay system of the active site.

Belongs to the peptidase S1 family. Snake venom subfamily. Monomer. Post-translationally, contains 6 disulfide bonds. As to expression, expressed by the venom gland.

It is found in the secreted. Enzyme activity is markedly inhibited by TLCK and PMSF, and moderately by SBTi. Platelet aggregating activity is strongly inhibited by TLCK. Its function is as follows. Thrombin-like snake venom serine protease that coagulates fibrinogen by inducing a fast degradation of the alpha chain (FGA) from human citrated plasma, and a slow degradation of beta chain (FGB). Potently induces platelet aggregation in both platelet rich plasma and washed platelet preparations in a concentration-dependent fashion. Shows amidolytic activities. The sequence is that of Thrombin-like enzyme F202 from Crotalus durissus cascavella (Northeastern Brazilian rattlesnake).